Reading from the N-terminus, the 167-residue chain is Ribosome maturation factor RimM (167 aa).

Residues 94-166 (DDRAWLHELE…YIHVPRFDEF (73 aa)) enclose the PRC barrel domain.

Belongs to the RimM family. Binds ribosomal protein uS19.

Its subcellular location is the cytoplasm. In terms of biological role, an accessory protein needed during the final step in the assembly of 30S ribosomal subunit, possibly for assembly of the head region. Essential for efficient processing of 16S rRNA. May be needed both before and after RbfA during the maturation of 16S rRNA. It has affinity for free ribosomal 30S subunits but not for 70S ribosomes. This chain is Ribosome maturation factor RimM, found in Chlorobium luteolum (strain DSM 273 / BCRC 81028 / 2530) (Pelodictyon luteolum).